The primary structure comprises 503 residues: DEAD-box ATP-dependent RNA helicase CshA (503 aa).

Positions 2-30 (QNFKELGISDKTVETLEAMGFKEPTPIQK) match the Q motif motif. A Helicase ATP-binding domain is found at 33-203 (IPYTLEGKDI…QQFMKSPQIV (171 aa)). An ATP-binding site is contributed by 46 to 53 (AQTGTGKT). A DEAD box motif is present at residues 150–153 (DEAD). Residues 214–375 (QIDEYYTIVK…LRPPHRKEVL (162 aa)) enclose the Helicase C-terminal domain. A disordered region spans residues 436–503 (EKPLARKNRQ…KGRTFADLQK (68 aa)). The span at 466 to 480 (KRSKGNFNKKKGKKT) shows a compositional bias: basic residues. The span at 481-490 (DRRERQDKGR) shows a compositional bias: basic and acidic residues.

The protein belongs to the DEAD box helicase family. CshA subfamily. In terms of assembly, oligomerizes, may be a member of the RNA degradosome.

The protein localises to the cytoplasm. It catalyses the reaction ATP + H2O = ADP + phosphate + H(+). In terms of biological role, DEAD-box RNA helicase possibly involved in RNA degradation. Unwinds dsRNA in both 5'- and 3'-directions, has RNA-dependent ATPase activity. The sequence is that of DEAD-box ATP-dependent RNA helicase CshA from Staphylococcus haemolyticus (strain JCSC1435).